A 392-amino-acid chain; its full sequence is 1-deoxy-D-xylulose 5-phosphate reductoisomerase (392 aa).

Residues threonine 10, glycine 11, serine 12, isoleucine 13, arginine 37, glutamine 38, and asparagine 124 each contribute to the NADPH site. A 1-deoxy-D-xylulose 5-phosphate-binding site is contributed by lysine 125. Glutamate 126 is an NADPH binding site. Aspartate 150 provides a ligand contact to Mn(2+). The 1-deoxy-D-xylulose 5-phosphate site is built by serine 151, glutamate 152, serine 179, and histidine 202. A Mn(2+)-binding site is contributed by glutamate 152. Glycine 208 contributes to the NADPH binding site. 1-deoxy-D-xylulose 5-phosphate is bound by residues serine 215, asparagine 220, lysine 221, and glutamate 224. Glutamate 224 contacts Mn(2+).

Belongs to the DXR family. It depends on Mg(2+) as a cofactor. Requires Mn(2+) as cofactor.

The enzyme catalyses 2-C-methyl-D-erythritol 4-phosphate + NADP(+) = 1-deoxy-D-xylulose 5-phosphate + NADPH + H(+). It participates in isoprenoid biosynthesis; isopentenyl diphosphate biosynthesis via DXP pathway; isopentenyl diphosphate from 1-deoxy-D-xylulose 5-phosphate: step 1/6. In terms of biological role, catalyzes the NADPH-dependent rearrangement and reduction of 1-deoxy-D-xylulose-5-phosphate (DXP) to 2-C-methyl-D-erythritol 4-phosphate (MEP). This is 1-deoxy-D-xylulose 5-phosphate reductoisomerase from Cupriavidus metallidurans (strain ATCC 43123 / DSM 2839 / NBRC 102507 / CH34) (Ralstonia metallidurans).